The chain runs to 402 residues: Succinylornithine transaminase (402 aa).

Lys252 is modified (N6-(pyridoxal phosphate)lysine).

It belongs to the class-III pyridoxal-phosphate-dependent aminotransferase family. AstC subfamily. It depends on pyridoxal 5'-phosphate as a cofactor.

It carries out the reaction N(2)-succinyl-L-ornithine + 2-oxoglutarate = N-succinyl-L-glutamate 5-semialdehyde + L-glutamate. Its pathway is amino-acid degradation; L-arginine degradation via AST pathway; L-glutamate and succinate from L-arginine: step 3/5. In terms of biological role, catalyzes the transamination of N(2)-succinylornithine and alpha-ketoglutarate into N(2)-succinylglutamate semialdehyde and glutamate. Can also act as an acetylornithine aminotransferase. This is Succinylornithine transaminase from Photorhabdus laumondii subsp. laumondii (strain DSM 15139 / CIP 105565 / TT01) (Photorhabdus luminescens subsp. laumondii).